Consider the following 515-residue polypeptide: Sterol 14-alpha demethylase cyp51A (515 aa).

A helical transmembrane segment spans residues 7-29; sequence LTAYMAVAVLTAILLNVVYQLFF. 2 N-linked (GlcNAc...) asparagine glycosylation sites follow: Asn-33 and Asn-269. Cys-454 is a heme binding site. N-linked (GlcNAc...) asparagine glycosylation is present at Asn-512.

Belongs to the cytochrome P450 family. Heme is required as a cofactor.

Its subcellular location is the endoplasmic reticulum membrane. It carries out the reaction a 14alpha-methyl steroid + 3 reduced [NADPH--hemoprotein reductase] + 3 O2 = a Delta(14) steroid + formate + 3 oxidized [NADPH--hemoprotein reductase] + 4 H2O + 4 H(+). It catalyses the reaction a 14alpha-methyl steroid + reduced [NADPH--hemoprotein reductase] + O2 = a 14alpha-hydroxymethyl steroid + oxidized [NADPH--hemoprotein reductase] + H2O + H(+). The enzyme catalyses a 14alpha-hydroxymethyl steroid + reduced [NADPH--hemoprotein reductase] + O2 = a 14alpha-formyl steroid + oxidized [NADPH--hemoprotein reductase] + 2 H2O + H(+). The catalysed reaction is a 14alpha-formyl steroid + reduced [NADPH--hemoprotein reductase] + O2 = a Delta(14) steroid + formate + oxidized [NADPH--hemoprotein reductase] + H2O + 2 H(+). It carries out the reaction lanosterol + 3 reduced [NADPH--hemoprotein reductase] + 3 O2 = 4,4-dimethyl-5alpha-cholesta-8,14,24-trien-3beta-ol + formate + 3 oxidized [NADPH--hemoprotein reductase] + 4 H2O + 4 H(+). It catalyses the reaction lanosterol + reduced [NADPH--hemoprotein reductase] + O2 = 32-hydroxylanosterol + oxidized [NADPH--hemoprotein reductase] + H2O + H(+). The enzyme catalyses 32-hydroxylanosterol + reduced [NADPH--hemoprotein reductase] + O2 = 32-oxolanosterol + oxidized [NADPH--hemoprotein reductase] + 2 H2O + H(+). The catalysed reaction is 32-oxolanosterol + reduced [NADPH--hemoprotein reductase] + O2 = 4,4-dimethyl-5alpha-cholesta-8,14,24-trien-3beta-ol + formate + oxidized [NADPH--hemoprotein reductase] + H2O + 2 H(+). It carries out the reaction eburicol + 3 reduced [NADPH--hemoprotein reductase] + 3 O2 = 14-demethyleburicol + formate + 3 oxidized [NADPH--hemoprotein reductase] + 4 H2O + 4 H(+). It catalyses the reaction eburicol + reduced [NADPH--hemoprotein reductase] + O2 = 32-hydroxyeburicol + oxidized [NADPH--hemoprotein reductase] + H2O + H(+). The enzyme catalyses 32-hydroxyeburicol + reduced [NADPH--hemoprotein reductase] + O2 = 32-oxoeburicol + oxidized [NADPH--hemoprotein reductase] + 2 H2O + H(+). The catalysed reaction is 32-oxoeburicol + reduced [NADPH--hemoprotein reductase] + O2 = 14-demethyleburicol + formate + oxidized [NADPH--hemoprotein reductase] + H2O + 2 H(+). It participates in steroid metabolism; ergosterol biosynthesis. Its activity is regulated as follows. The sterol 14-alpha demethylase activity is inhibited by azole compounds. Activity is inhibited by the novel and long-acting fungicidal azole, PC1244. In terms of biological role, sterol 14alpha-demethylase, encoded by cyp51A and cyp51B, that plays a critical role in the third module of ergosterol biosynthesis pathway, being ergosterol the major sterol component in fungal membranes that participates in a variety of functions. The third module or late pathway involves the ergosterol synthesis itself through consecutive reactions that mainly occur in the endoplasmic reticulum (ER) membrane. In filamentous fungi, during the initial step of this module, lanosterol (lanosta-8,24-dien-3beta-ol) can be metabolized to eburicol. Sterol 14alpha-demethylase catalyzes the three-step oxidative removal of the 14alpha-methyl group (C-32) of both these sterols in the form of formate, and converts eburicol and lanosterol to 14-demethyleburicol (4,4,24-trimethylergosta-8,14,24(28)-trienol) and 4,4-dimethyl-5alpha-cholesta-8,14,24-trien-3beta-ol, respectively, which are further metabolized by other enzymes in the pathway to ergosterol. Can also use substrates not intrinsic to fungi, such as 24,25-dihydrolanosterol (DHL), producing 4,4'-dimethyl-8,14-cholestadien-3-beta-ol, but at lower rates than the endogenous substrates. As a target of azole drugs, plays a crucial role in azole susceptibility. The sequence is that of Sterol 14-alpha demethylase cyp51A from Aspergillus fumigatus (strain ATCC MYA-4609 / CBS 101355 / FGSC A1100 / Af293) (Neosartorya fumigata).